A 185-amino-acid polypeptide reads, in one-letter code: MYKSVITEMKAHMEKSVEDLRKEYQRIRTGRASTSLLDEVKVDYYGNPSSLSQVATLAVPEPRTITITPWESKMIGPIEKAILNANLGLTPGNDGKLIRLNLPPLTEERRKEIVKGMKKMDEDHKVAVRNIRRKAIDDLKKMEKDKSITEDELKKAEKEVQTVTDSIIAKLDEILAHKEKEVMEV.

It belongs to the RRF family.

It localises to the cytoplasm. Responsible for the release of ribosomes from messenger RNA at the termination of protein biosynthesis. May increase the efficiency of translation by recycling ribosomes from one round of translation to another. The protein is Ribosome-recycling factor of Trichlorobacter lovleyi (strain ATCC BAA-1151 / DSM 17278 / SZ) (Geobacter lovleyi).